A 172-amino-acid chain; its full sequence is MERAAKKEAVDALKGTFQSTGVAIVAHYSGLTVAQMQTLRTQMKQAGASVKVSKNRLAKIALEGTDVASIGSLLKGPTVIATSNDPVAAPKIAVEFAKTNEQFVILGGAMGTTVLNPDAVKALASLPSLDELRAKIIGLLVAPATKIAQLTNAPAAKVARVVQAYASKGEAA.

The protein belongs to the universal ribosomal protein uL10 family. As to quaternary structure, part of the ribosomal stalk of the 50S ribosomal subunit. The N-terminus interacts with L11 and the large rRNA to form the base of the stalk. The C-terminus forms an elongated spine to which L12 dimers bind in a sequential fashion forming a multimeric L10(L12)X complex.

Functionally, forms part of the ribosomal stalk, playing a central role in the interaction of the ribosome with GTP-bound translation factors. The protein is Large ribosomal subunit protein uL10 of Afipia carboxidovorans (strain ATCC 49405 / DSM 1227 / KCTC 32145 / OM5) (Oligotropha carboxidovorans).